Consider the following 317-residue polypeptide: MAELACFCYPHLENDSYKFIPFNNLAIKAMLTAKVDKKDMDKFYDSIIYGIAPPPQFKKRYNTNDNSRGMNFETIMFTKVAMLICEALNSLKVTQANVSNVLSRVVSIRHLENLVIRKENPQDILFHSKDLLLKSTLIAIGQSKEIETTITAEGGEIVFQNAAFTMWKLTYLEHQLMPILDQNFIEYKVTLNEDKPISDVHVKELVAELRWQYNKFAVITHGKGHYRIVKYSSVANHADRVYATFKSNVKTGVNNDFNLLDQRIIWQNWYAFTSTMKQGNTLDVCKRLLFQKMKPEKNPFKGLSTDRKMDEVSQVGV.

Residues 107–109, Lys-188, and 221–223 each bind ATP; these read SIR and HGK. The RNA-binding stretch occupies residues 205-241; it reads LVAELRWQYNKFAVITHGKGHYRIVKYSSVANHADRV. His-225 acts as the For NTPase and RTPase activities in catalysis. Arg-227 is an ATP binding site.

It belongs to the rotavirus NSP2 family. Homooctamer. Interacts with VP1; this interaction is weak. Interacts with NSP5; this interaction leads to up-regulation of NSP5 phosphorylation and formation of viral factories. Interacts with host DCP1A, DCP1B, DDX6, EDC4 and EIF2S1/eIF2-alpha; these interactions are probably part of the sequestration of some host SGs and PBs proteins in viral factories. Mg(2+) is required as a cofactor.

It is found in the host cytoplasm. Functionally, participates in replication and packaging of the viral genome. Plays a crucial role, together with NSP5, in the formation of virus factories (viroplasms), which are large inclusions in the host cytoplasm where replication intermediates are assembled and viral RNA replication takes place. Displays ssRNA binding, NTPase, RNA triphosphatase (RTPase) and ATP-independent helix-unwinding activities. The unwinding activity may prepare and organize plus-strand RNAs for packaging and replication by removing interfering secondary structures. The RTPase activity plays a role in the removal of the gamma-phosphate from the rotavirus RNA minus strands of dsRNA genome segments. Participates in the selective exclusion of host proteins from stress granules (SG) and P bodies (PB). Also participates in the sequestration of these remodeled organelles in viral factories. The sequence is that of Non-structural protein 2 from Rotavirus A (strain RVA/SA11-Patton/G3P[X]) (RV-A).